The chain runs to 500 residues: Putative antiporter subunit mnhD2 (500 aa).

The next 14 membrane-spanning stretches (helical) occupy residues 2–22, 32–52, 78–98, 108–128, 130–150, 161–181, 209–229, 240–260, 273–293, 308–328, 330–350, 368–388, 403–423, and 450–470; these read MSNL…ILVF, ILSI…LIYV, LSLL…AYGF, FHLP…FLTS, LFNL…LVTL, IVYV…IGML, ISLV…FMWL, LAAL…IRFF, TLLV…VIAY, IGFI…GAIF, LAND…LVYM, FFGV…PFSG, GNYI…YSLF, and GLLS…PVVL.

This sequence belongs to the CPA3 antiporters (TC 2.A.63) subunit D family. May form a heterooligomeric complex that consists of seven subunits: mnhA2, mnhB2, mnhC2, mnhD2, mnhE2, mnhF2 and mnhG2.

The protein localises to the cell membrane. This chain is Putative antiporter subunit mnhD2 (mnhD2), found in Staphylococcus epidermidis (strain ATCC 12228 / FDA PCI 1200).